A 512-amino-acid chain; its full sequence is Glutathione-binding protein GsiB (512 aa).

A signal peptide spans 1–26 (MARAVHRSGLVALGIATALMASCAFA).

This sequence belongs to the bacterial solute-binding protein 5 family. In terms of assembly, the complex is composed of two ATP-binding proteins (GsiA), two transmembrane proteins (GsiC and GsiD) and a solute-binding protein (GsiB).

Its subcellular location is the periplasm. Part of the ABC transporter complex GsiABCD involved in glutathione import. Binds glutathione. In Escherichia coli O1:K1 / APEC, this protein is Glutathione-binding protein GsiB.